Here is a 375-residue protein sequence, read N- to C-terminus: Digeranylgeranylglycerophospholipid reductase 1 (375 aa).

10 residues coordinate FAD: A13, E32, C43, A44, G46, R92, A116, D275, G287, and L288. A 2,3-bis-O-(geranylgeranyl)-sn-glycerol 1-phospholipid is bound at residue G367.

Belongs to the geranylgeranyl reductase family. DGGGPL reductase subfamily. It depends on FAD as a cofactor.

The catalysed reaction is a 2,3-bis-O-phytanyl-sn-glycerol 1-phospholipid + 8 A = a 2,3-bis-O-(geranylgeranyl)-sn-glycerol 1-phospholipid + 8 AH2. It catalyses the reaction 2,3-bis-O-(phytanyl)-sn-glycerol 1-phosphate + 8 A = 2,3-bis-O-(geranylgeranyl)-sn-glycerol 1-phosphate + 8 AH2. The enzyme catalyses CDP-2,3-bis-O-(geranylgeranyl)-sn-glycerol + 8 AH2 = CDP-2,3-bis-O-(phytanyl)-sn-glycerol + 8 A. It carries out the reaction archaetidylserine + 8 AH2 = 2,3-bis-O-phytanyl-sn-glycero-3-phospho-L-serine + 8 A. The protein operates within membrane lipid metabolism; glycerophospholipid metabolism. In terms of biological role, is involved in the reduction of 2,3-digeranylgeranylglycerophospholipids (unsaturated archaeols) into 2,3-diphytanylglycerophospholipids (saturated archaeols) in the biosynthesis of archaeal membrane lipids. Catalyzes the formation of archaetidic acid (2,3-di-O-phytanyl-sn-glyceryl phosphate) from 2,3-di-O-geranylgeranylglyceryl phosphate (DGGGP) via the hydrogenation of each double bond of the isoprenoid chains. Is also probably able to reduce double bonds of geranyl groups in CDP-2,3-bis-O-(geranylgeranyl)-sn-glycerol and archaetidylserine, thus acting at various stages in the biosynthesis of archaeal membrane lipids. This chain is Digeranylgeranylglycerophospholipid reductase 1, found in Methanopyrus kandleri (strain AV19 / DSM 6324 / JCM 9639 / NBRC 100938).